A 393-amino-acid chain; its full sequence is Homoserine O-succinyltransferase (393 aa).

The AB hydrolase-1 domain maps to 62 to 372 (NAVLVCHALN…PHGHDAFLLD (311 aa)). Catalysis depends on serine 168, which acts as the Nucleophile. Arginine 238 provides a ligand contact to substrate. Active-site residues include aspartate 333 and histidine 366. Aspartate 367 provides a ligand contact to substrate.

It belongs to the AB hydrolase superfamily. MetX family. As to quaternary structure, homodimer.

Its subcellular location is the cytoplasm. The enzyme catalyses L-homoserine + succinyl-CoA = O-succinyl-L-homoserine + CoA. It functions in the pathway amino-acid biosynthesis; L-methionine biosynthesis via de novo pathway; O-succinyl-L-homoserine from L-homoserine: step 1/1. In terms of biological role, transfers a succinyl group from succinyl-CoA to L-homoserine, forming succinyl-L-homoserine. This chain is Homoserine O-succinyltransferase, found in Cupriavidus taiwanensis (strain DSM 17343 / BCRC 17206 / CCUG 44338 / CIP 107171 / LMG 19424 / R1) (Ralstonia taiwanensis (strain LMG 19424)).